A 109-amino-acid chain; its full sequence is DNA-binding protein Mpal_0536 (109 aa).

A disordered region spans residues 14 to 35; that stretch reads MAQLQSQQMDQQQMDEEKQRAK. Low complexity predominate over residues 16–25; sequence QLQSQQMDQQ.

It belongs to the PDCD5 family.

The chain is DNA-binding protein Mpal_0536 from Methanosphaerula palustris (strain ATCC BAA-1556 / DSM 19958 / E1-9c).